Here is a 420-residue protein sequence, read N- to C-terminus: Vasopressin V1a receptor (420 aa).

The interval 1–45 (MSFPRGSYDPAASNSSPRWPLSAEDANSSREAAGHQKGSDPSGDV) is disordered. Residues 1 to 54 (MSFPRGSYDPAASNSSPRWPLSAEDANSSREAAGHQKGSDPSGDVRNEELAKLE) are Extracellular-facing. Asn27 is a glycosylation site (N-linked (GlcNAc...) asparagine). The segment covering 32–45 (AAGHQKGSDPSGDV) has biased composition (basic and acidic residues). The helical transmembrane segment at 55–75 (IAVLAVIFVVAVLGNSSVLLA) threads the bilayer. Topologically, residues 76–92 (LHRTPRKTSRMHLFIRH) are cytoplasmic. Residues 93-113 (LSLADLAVAFFQVLPQLCWDI) form a helical membrane-spanning segment. At 114–125 (TYRFRGPDWLCR) the chain is on the extracellular side. Cysteines 124 and 205 form a disulfide. The chain crosses the membrane as a helical span at residues 126-146 (VVKHLQVFAMFASAYMLVVMT). Over 147–168 (ADRYIAVCHPLKTLQQPARRSR) the chain is Cytoplasmic. The helical transmembrane segment at 169–189 (LMIAASWVLSFLLSTPQYFIF) threads the bilayer. Residues 190-225 (SMIEIEVNNGTKTQDCWATFIQPWGTRAYVTWMTSG) lie on the Extracellular side of the membrane. N-linked (GlcNAc...) asparagine glycosylation occurs at Asn198. Residues 226-246 (VFVVPVVILGTCYGFICYHIW) traverse the membrane as a helical segment. Over 247 to 294 (RNVRGKTASRQSKGSGEDVAPFHKGLLVTPCVSSVKTISRAKIRTVKM) the chain is Cytoplasmic. Residues 295 to 315 (TFVIVTAYILCWAPFFIVQMW) form a helical membrane-spanning segment. The Extracellular portion of the chain corresponds to 316–331 (SVWDDNFIWTDSENPS). The chain crosses the membrane as a helical span at residues 332–352 (ITITALLASLNSCCNPWIYMF). The Cytoplasmic segment spans residues 353–420 (FSGHLLQDCV…RSIRFIPVST (68 aa)). 2 S-palmitoyl cysteine lipidation sites follow: Cys367 and Cys368. The interval 379–411 (DSDNMSRRQTSYSNNRSPTNSTGTWKDSPKSSR) is disordered. Residues 385–403 (RRQTSYSNNRSPTNSTGTW) are compositionally biased toward polar residues. At Ser406 the chain carries Phosphoserine.

It belongs to the G-protein coupled receptor 1 family. Vasopressin/oxytocin receptor subfamily.

Its subcellular location is the cell membrane. Its function is as follows. Receptor for arginine vasopressin. The activity of this receptor is mediated by G proteins which activate a phosphatidyl-inositol-calcium second messenger system. Involved in social memory formation. This chain is Vasopressin V1a receptor (Avpr1a), found in Microtus montanus (Montane vole).